We begin with the raw amino-acid sequence, 356 residues long: Magnesium-protoporphyrin IX monomethyl ester [oxidative] cyclase (356 aa).

This sequence belongs to the AcsF family. Fe cation serves as cofactor.

It carries out the reaction Mg-protoporphyrin IX 13-monomethyl ester + 3 NADPH + 3 O2 + 2 H(+) = 3,8-divinyl protochlorophyllide a + 3 NADP(+) + 5 H2O. It participates in porphyrin-containing compound metabolism; chlorophyll biosynthesis (light-independent). Catalyzes the formation of the isocyclic ring in chlorophyll biosynthesis. Mediates the cyclase reaction, which results in the formation of divinylprotochlorophyllide (Pchlide) characteristic of all chlorophylls from magnesium-protoporphyrin IX 13-monomethyl ester (MgPMME). This chain is Magnesium-protoporphyrin IX monomethyl ester [oxidative] cyclase, found in Synechococcus sp. (strain CC9605).